A 191-amino-acid polypeptide reads, in one-letter code: Potassium-transporting ATPase KdpC subunit (191 aa).

The chain crosses the membrane as a helical span at residues 8-28 (LFLFLLLLLVTGLAYPLLTTV).

It belongs to the KdpC family. As to quaternary structure, the system is composed of three essential subunits: KdpA, KdpB and KdpC.

Its subcellular location is the cell inner membrane. Functionally, part of the high-affinity ATP-driven potassium transport (or Kdp) system, which catalyzes the hydrolysis of ATP coupled with the electrogenic transport of potassium into the cytoplasm. This subunit acts as a catalytic chaperone that increases the ATP-binding affinity of the ATP-hydrolyzing subunit KdpB by the formation of a transient KdpB/KdpC/ATP ternary complex. The sequence is that of Potassium-transporting ATPase KdpC subunit from Pectobacterium atrosepticum (strain SCRI 1043 / ATCC BAA-672) (Erwinia carotovora subsp. atroseptica).